Consider the following 387-residue polypeptide: 3-ketoacyl-CoA thiolase (387 aa).

The active-site Acyl-thioester intermediate is Cys-91. Catalysis depends on proton acceptor residues His-343 and Cys-373.

It belongs to the thiolase-like superfamily. Thiolase family. As to quaternary structure, heterotetramer of two alpha chains (FadB) and two beta chains (FadA).

The protein resides in the cytoplasm. It catalyses the reaction an acyl-CoA + acetyl-CoA = a 3-oxoacyl-CoA + CoA. It functions in the pathway lipid metabolism; fatty acid beta-oxidation. In terms of biological role, catalyzes the final step of fatty acid oxidation in which acetyl-CoA is released and the CoA ester of a fatty acid two carbons shorter is formed. This Shewanella sp. (strain MR-4) protein is 3-ketoacyl-CoA thiolase.